A 646-amino-acid chain; its full sequence is Leukotriene A-4 hydrolase homolog (646 aa).

Residues 172-174 (QCQ) and 307-312 (PYGGME) each bind a peptide. Residue His-336 coordinates Zn(2+). Glu-337 serves as the catalytic Proton acceptor. Zn(2+)-binding residues include His-340 and Glu-359. Tyr-424 (proton donor) is an active-site residue.

Belongs to the peptidase M1 family. It depends on Zn(2+) as a cofactor.

Its subcellular location is the cytoplasm. It localises to the nucleus. The catalysed reaction is leukotriene A4 + H2O = leukotriene B4. It functions in the pathway lipid metabolism; leukotriene B4 biosynthesis. Functionally, aminopeptidase that preferentially cleaves tripeptides. Also has low epoxide hydrolase activity (in vitro). Can hydrolyze an epoxide moiety of LTA(4) to form LTB(4) (in vitro). The sequence is that of Leukotriene A-4 hydrolase homolog from Botryotinia fuckeliana (strain B05.10) (Noble rot fungus).